The primary structure comprises 274 residues: 1D-myo-inositol 2-acetamido-2-deoxy-alpha-D-glucopyranoside deacetylase 2 (274 aa).

His6, Asp9, and His140 together coordinate Zn(2+).

This sequence belongs to the MshB deacetylase family. The cofactor is Zn(2+).

The catalysed reaction is 1D-myo-inositol 2-acetamido-2-deoxy-alpha-D-glucopyranoside + H2O = 1D-myo-inositol 2-amino-2-deoxy-alpha-D-glucopyranoside + acetate. In terms of biological role, catalyzes the deacetylation of 1D-myo-inositol 2-acetamido-2-deoxy-alpha-D-glucopyranoside (GlcNAc-Ins) in the mycothiol biosynthesis pathway. The protein is 1D-myo-inositol 2-acetamido-2-deoxy-alpha-D-glucopyranoside deacetylase 2 of Saccharopolyspora erythraea (strain ATCC 11635 / DSM 40517 / JCM 4748 / NBRC 13426 / NCIMB 8594 / NRRL 2338).